An 811-amino-acid polypeptide reads, in one-letter code: Lysine-specific histone demethylase 1 homolog 3 (811 aa).

Positions 1–10 (MSDQPPPYTP) are enriched in pro residues. The segment at 1-79 (MSDQPPPYTP…PSAQPPPRAS (79 aa)) is disordered. A compositionally biased stretch (basic residues) spans 44-55 (NKRKRTGFRRKL). Residues 56–71 (PSGSPAAPVAVAASPS) show a composition bias toward low complexity. The SWIRM domain maps to 88-189 (NREPTAEAVT…FGVAPAIKER (102 aa)). Residues Glu-227, Arg-229, Arg-235, and Glu-609 each contribute to the FAD site. Residues 790–811 (RNSSRTKTRPSKLKIGIPKSKS) form a disordered region.

Belongs to the flavin monoamine oxidase family. FAD is required as a cofactor.

Probable histone demethylase. In Oryza sativa subsp. japonica (Rice), this protein is Lysine-specific histone demethylase 1 homolog 3.